Consider the following 308-residue polypeptide: 4-hydroxyproline 2-epimerase (308 aa).

The active-site Proton acceptor is cysteine 88. Substrate is bound by residues 89–90 (GH), histidine 208, and aspartate 232. Cysteine 236 functions as the Proton donor in the catalytic mechanism. Position 237-238 (237-238 (GT)) interacts with substrate.

The protein belongs to the proline racemase family.

The enzyme catalyses trans-4-hydroxy-L-proline = cis-4-hydroxy-D-proline. Functionally, catalyzes the epimerization of trans-4-hydroxy-L-proline (t4LHyp) to cis-4-hydroxy-D-proline (c4DHyp). Is likely involved in a degradation pathway that converts t4LHyp to alpha-ketoglutarate. Can also catalyze the epimerization of trans-3-hydroxy-L-proline (t3LHyp) to cis-3-hydroxy-D-proline (c3DHyp), albeit with 19-fold lower efficiency. Displays no proline racemase activity. This chain is 4-hydroxyproline 2-epimerase, found in Chromobacterium violaceum (strain ATCC 12472 / DSM 30191 / JCM 1249 / CCUG 213 / NBRC 12614 / NCIMB 9131 / NCTC 9757 / MK).